A 243-amino-acid polypeptide reads, in one-letter code: tRNA pseudouridine synthase A (243 aa).

Asp-53 functions as the Nucleophile in the catalytic mechanism. Tyr-111 is a binding site for substrate.

Belongs to the tRNA pseudouridine synthase TruA family. Homodimer.

The catalysed reaction is uridine(38/39/40) in tRNA = pseudouridine(38/39/40) in tRNA. In terms of biological role, formation of pseudouridine at positions 38, 39 and 40 in the anticodon stem and loop of transfer RNAs. The polypeptide is tRNA pseudouridine synthase A (Chlorobium phaeovibrioides (strain DSM 265 / 1930) (Prosthecochloris vibrioformis (strain DSM 265))).